The chain runs to 70 residues: Large ribosomal subunit protein eL38 (70 aa).

The protein belongs to the eukaryotic ribosomal protein eL38 family.

The polypeptide is Large ribosomal subunit protein eL38 (RpL38) (Anopheles gambiae (African malaria mosquito)).